A 549-amino-acid polypeptide reads, in one-letter code: Carboxylesterase 1C (549 aa).

The first 18 residues, 1 to 18 (MWLCALVWASLAVCPIWG), serve as a signal peptide directing secretion. The N-linked (GlcNAc...) asparagine glycan is linked to Asn-79. Cys-87 and Cys-116 form a disulfide bridge. Residue Ser-221 is the Acyl-ester intermediate of the active site. An intrachain disulfide couples Cys-273 to Cys-284. N-linked (GlcNAc...) asparagine glycans are attached at residues Asn-274, Asn-275, and Asn-302. Glu-340 serves as the catalytic Charge relay system. Asn-375 carries N-linked (GlcNAc...) asparagine glycosylation. His-453 serves as the catalytic Charge relay system. The residue at position 471 (Ser-471) is a Phosphoserine. A glycan (N-linked (GlcNAc...) asparagine) is linked at Asn-476. The Prevents secretion from ER motif lies at 546–549 (TEHT).

This sequence belongs to the type-B carboxylesterase/lipase family.

It localises to the endoplasmic reticulum lumen. The catalysed reaction is a carboxylic ester + H2O = an alcohol + a carboxylate + H(+). Its function is as follows. Involved in the detoxification of xenobiotics and in the activation of ester and amide prodrugs. Involved in the extracellular metabolism of lung surfactant. This is Carboxylesterase 1C (Ces1c) from Rattus norvegicus (Rat).